The chain runs to 155 residues: Small ribosomal subunit protein uS7 (155 aa).

The protein belongs to the universal ribosomal protein uS7 family. In terms of assembly, part of the 30S ribosomal subunit. Contacts proteins S9 and S11.

One of the primary rRNA binding proteins, it binds directly to 16S rRNA where it nucleates assembly of the head domain of the 30S subunit. Is located at the subunit interface close to the decoding center, probably blocks exit of the E-site tRNA. This is Small ribosomal subunit protein uS7 from Xylella fastidiosa (strain M12).